Reading from the N-terminus, the 311-residue chain is Ketoisovalerate oxidoreductase subunit VorB (311 aa).

Heterotetramer of one alpha, one beta, one delta and one gamma chain.

It carries out the reaction 3-methyl-2-oxobutanoate + 2 oxidized [2Fe-2S]-[ferredoxin] + CoA = 2-methylpropanoyl-CoA + 2 reduced [2Fe-2S]-[ferredoxin] + CO2 + H(+). This chain is Ketoisovalerate oxidoreductase subunit VorB (vorB), found in Pyrococcus abyssi (strain GE5 / Orsay).